A 362-amino-acid polypeptide reads, in one-letter code: Heme A synthase (362 aa).

The next 5 membrane-spanning stretches (helical) occupy residues 11–31 (AAIRIWLSIVAGLIALMVLVG), 102–122 (VIGMVYLLPFLWFLWRGAVSG), 128–148 (LWLIFGLGALQGAVGWWMVAS), 159–179 (VRLATHLSLALLIFASIVWTL), and 198–218 (AWALVGVTFVQLYLGALVAGL). Residue histidine 262 participates in heme binding. 3 helical membrane-spanning segments follow: residues 264 to 286 (MTAYTLLALAAWHAFDVMRAGAG), 297 to 317 (LAAILVQAVLGIATLLMVVPI), and 318 to 338 (SLALLHQGTALIVLTFAVLQA). Heme is bound at residue histidine 323.

Belongs to the COX15/CtaA family. Type 2 subfamily. Interacts with CtaB. Heme b serves as cofactor.

It localises to the cell membrane. The enzyme catalyses Fe(II)-heme o + 2 A + H2O = Fe(II)-heme a + 2 AH2. It functions in the pathway porphyrin-containing compound metabolism; heme A biosynthesis; heme A from heme O: step 1/1. Functionally, catalyzes the conversion of heme O to heme A by two successive hydroxylations of the methyl group at C8. The first hydroxylation forms heme I, the second hydroxylation results in an unstable dihydroxymethyl group, which spontaneously dehydrates, resulting in the formyl group of heme A. The protein is Heme A synthase of Bradyrhizobium sp. (strain ORS 278).